An 846-amino-acid chain; its full sequence is Envelope glycoprotein gp160 (846 aa).

The first 31 residues, 1-31 (MRAREKERNCQNLWKWGIMLLGMLMTCSAAE), serve as a signal peptide directing secretion. Topologically, residues 32–674 (DLWVTVYYGV…ITKWLWYIKL (643 aa)) are extracellular. The cysteines at positions 53 and 73 are disulfide-linked. Residues Asn87, Asn129, Asn151, Asn179, Asn182, Asn229, Asn236, Asn257, Asn271, Asn284, and Asn290 are each glycosylated (N-linked (GlcNAc...) asparagine; by host). Disulfide bonds link Cys118–Cys200, Cys125–Cys191, Cys130–Cys152, Cys213–Cys242, and Cys223–Cys234. The interval 130-151 (CTDELRNSKGNGKVEEEEKRKN) is V1. A V2 region spans residues 152–191 (CSFNVRDKREQVYALFYKLDIVPIDNNNRTNSTNYRLINC). The segment at 291-327 (CTRPYKYTRQRTSIGLRQSLYTITGKKKKTGYIGQAH) is V3. Cys291 and Cys328 are joined by a disulfide. Asn351 is a glycosylation site (N-linked (GlcNAc...) asparagine; by host). The tract at residues 360–370 (SSGGDPEITSH) is CD4-binding loop. 2 disulfide bridges follow: Cys374–Cys435 and Cys381–Cys408. Positions 381–408 (CNTSRLFNSTWNQTNSTGFNNGTVTLPC) are V4. Residues Asn382, Asn388, Asn392, Asn395, Asn401, Asn438, Asn451, and Asn452 are each glycosylated (N-linked (GlcNAc...) asparagine; by host). V5 stretches follow at residues 450 to 461 (ANNSSHETIRPG) and 453 to 461 (SSHETIRPG). The segment at 502 to 522 (AIGLGAVFLGFLGAAGSTMGA) is fusion peptide. The immunosuppression stretch occupies residues 564-582 (KQLQARVLAVERYLRDQQL). Cys588 and Cys594 are joined by a disulfide. N-linked (GlcNAc...) asparagine; by host glycans are attached at residues Asn601, Asn606, Asn615, and Asn627. Positions 623–657 (REIDNYTGLIYSLIEESQIQQEKNEKELLELDKWA) form a coiled coil. Residues 652 to 673 (ELDKWASLWNWFSITKWLWYIK) are MPER; binding to GalCer. A helical transmembrane segment spans residues 675–695 (FIMIVGGLIGLRIVFAVLSVV). Over 696–846 (NRVRQGYSPL…IRQGLERLLL (151 aa)) the chain is Cytoplasmic. The YXXL motif; contains endocytosis signal signature appears at 702-705 (YSPL). 2 S-palmitoyl cysteine; by host lipidation sites follow: Cys754 and Cys827. A Di-leucine internalization motif motif is present at residues 845-846 (LL).

The protein belongs to the HIV-1 env protein family. The mature envelope protein (Env) consists of a homotrimer of non-covalently associated gp120-gp41 heterodimers. The resulting complex protrudes from the virus surface as a spike. There seems to be as few as 10 spikes on the average virion. Interacts with host CD4, CCR5 and CXCR4. Gp120 also interacts with the C-type lectins CD209/DC-SIGN and CLEC4M/DC-SIGNR (collectively referred to as DC-SIGN(R)). Gp120 and gp41 interact with GalCer. Gp120 interacts with host ITGA4/ITGB7 complex; on CD4+ T-cells, this interaction results in rapid activation of integrin ITGAL/LFA-1, which facilitates efficient cell-to-cell spreading of HIV-1. Gp120 interacts with cell-associated heparan sulfate; this interaction increases virus infectivity on permissive cells and may be involved in infection of CD4- cells. As to quaternary structure, the mature envelope protein (Env) consists of a homotrimer of non-covalently associated gp120-gp41 heterodimers. The resulting complex protrudes from the virus surface as a spike. There seems to be as few as 10 spikes on the average virion. In terms of processing, highly glycosylated by host. The high number of glycan on the protein is reffered to as 'glycan shield' because it contributes to hide protein sequence from adaptive immune system. Post-translationally, palmitoylation of the transmembrane protein and of Env polyprotein (prior to its proteolytic cleavage) is essential for their association with host cell membrane lipid rafts. Palmitoylation is therefore required for envelope trafficking to classical lipid rafts, but not for viral replication. Specific enzymatic cleavages in vivo yield mature proteins. Envelope glycoproteins are synthesized as an inactive precursor that is heavily N-glycosylated and processed likely by host cell furin in the Golgi to yield the mature SU and TM proteins. The cleavage site between SU and TM requires the minimal sequence [KR]-X-[KR]-R. About 2 of the 9 disulfide bonds of gp41 are reduced by P4HB/PDI, following binding to CD4 receptor.

Its subcellular location is the virion membrane. It localises to the host cell membrane. It is found in the host endosome membrane. Oligomerizes in the host endoplasmic reticulum into predominantly trimers. In a second time, gp160 transits in the host Golgi, where glycosylation is completed. The precursor is then proteolytically cleaved in the trans-Golgi and thereby activated by cellular furin or furin-like proteases to produce gp120 and gp41. Functionally, attaches the virus to the host lymphoid cell by binding to the primary receptor CD4. This interaction induces a structural rearrangement creating a high affinity binding site for a chemokine coreceptor like CXCR4 and/or CCR5. Acts as a ligand for CD209/DC-SIGN and CLEC4M/DC-SIGNR, which are respectively found on dendritic cells (DCs), and on endothelial cells of liver sinusoids and lymph node sinuses. These interactions allow capture of viral particles at mucosal surfaces by these cells and subsequent transmission to permissive cells. HIV subverts the migration properties of dendritic cells to gain access to CD4+ T-cells in lymph nodes. Virus transmission to permissive T-cells occurs either in trans (without DCs infection, through viral capture and transmission), or in cis (following DCs productive infection, through the usual CD4-gp120 interaction), thereby inducing a robust infection. In trans infection, bound virions remain infectious over days and it is proposed that they are not degraded, but protected in non-lysosomal acidic organelles within the DCs close to the cell membrane thus contributing to the viral infectious potential during DCs' migration from the periphery to the lymphoid tissues. On arrival at lymphoid tissues, intact virions recycle back to DCs' cell surface allowing virus transmission to CD4+ T-cells. In terms of biological role, acts as a class I viral fusion protein. Under the current model, the protein has at least 3 conformational states: pre-fusion native state, pre-hairpin intermediate state, and post-fusion hairpin state. During fusion of viral and target intracellular membranes, the coiled coil regions (heptad repeats) assume a trimer-of-hairpins structure, positioning the fusion peptide in close proximity to the C-terminal region of the ectodomain. The formation of this structure appears to drive apposition and subsequent fusion of viral and target cell membranes. Complete fusion occurs in host cell endosomes and is dynamin-dependent, however some lipid transfer might occur at the plasma membrane. The virus undergoes clathrin-dependent internalization long before endosomal fusion, thus minimizing the surface exposure of conserved viral epitopes during fusion and reducing the efficacy of inhibitors targeting these epitopes. Membranes fusion leads to delivery of the nucleocapsid into the cytoplasm. In Human immunodeficiency virus type 1 group M subtype D (isolate NDK) (HIV-1), this protein is Envelope glycoprotein gp160.